The following is a 1032-amino-acid chain: MGDIMRPIPFEELLTRIFDEYQQQRSIFGIPEQQFYSPVKGKTVSVFGETCATPVGPAAGPHTQLAQNIVTSWLTGGRFIELKTVQILDRLELEKPCIDAEDECFNTEWSTEFTLLKAWDEYLKAWFALHLLEAMFQPSDSGKSFIFNMSVGYNLEGIKQPPMQQFIDNMMDASDHPKFAQYRDTLNKLLQDDAFLARHGLQEKRESLQALPARIPTSMVHGVTLSTMHGCPPHEIEAICRYMLEEKGLNTFVKLNPTLLGYARVREILDVCGFGYIGLKEESFDHDLKLTQALEMLERLMALAKEKSLGFGVKLTNTLGTINNKGALPGEEMYMSGRALFPLSINVAAVLSRAFDGKLPISYSGGASQLTIRDIFDTGIRPITMATDLLKPGGYLRLSACMRELEGSDAWGLDHVDVERLNRLAADALTMEYTQKHWKPEERIEVAEDLPLTDCYVAPCVTACAIKQDIPEYIRLLGEHRYADALELIYQRNALPAITGHICDHQCQYNCTRLDYDSALNIRELKKVALEKGWDEYKQRWHKPAGSGSRHPVAVIGAGPAGLAAGYFLARAGHPVTLFEREANAGGVVKNIIPQFRIPAELIQHDIDFVAAHGVKFEYGCSPDLTVEQLKNQDFHYVLIATGTDKNSGVKLAGDNQNVLKSLPFLREYNKGTALKLGKHVVVVGAGNTAMDCARAALRVPGVEKATVVYRRSLQEMPAWREEYEEALHDGVEFRFLNNPERFDADGTLTLRVMSLGEPDEKGRRRPVETNETVTLHVDSLITAIGEQQDTEALNAMGVPLDKNGWPDVDHNGETRLTDVFMIGDVQRGPSSIVAAVGTARRATDAILSRENIRSHQNDKYWNNVNPAEIYQRKGDISITLVNSDDRDAFVAQEAARCLECNYVCSKCVDVCPNRANVSIAVPGFQNRFQTLHLDAYCNECGNCAQFCPWNGKPYKDKITVFSLAQDFDNSSNPGFLVEDCRVRVRLNNQSWVLNIDSEGQFNNVPPELNDMCRIISHVHQHHHYLLGRVEV.

The 4Fe-4S ferredoxin-type domain maps to 928 to 958 (RFQTLHLDAYCNECGNCAQFCPWNGKPYKDK). [4Fe-4S] cluster-binding residues include Cys938, Cys941, Cys944, and Cys948.

It depends on [4Fe-4S] cluster as a cofactor.

In terms of biological role, could be an iron-sulfur flavoprotein with NADPH:O(2) oxidoreductase activity. This chain is Putative oxidoreductase YgfK (ygfK), found in Escherichia coli O157:H7.